The chain runs to 397 residues: 16-O-methyltransferase bsc6 (397 aa).

Residue Asp262 coordinates S-adenosyl-L-methionine. His302 acts as the Proton acceptor in catalysis.

This sequence belongs to the class I-like SAM-binding methyltransferase superfamily. Cation-independent O-methyltransferase family. The cofactor is S-adenosyl-L-methionine.

The protein operates within mycotoxin biosynthesis. 16-O-methyltransferase; part of the gene cluster that mediates the biosynthesis of the diterpene glucoside brassicicene C. In the first step of the brassicicene C biosynthesis, the bifunctional diterpene synthase bsc8 that possesses both prenyl transferase and terpene cyclase activity, converts isopentenyl diphosphate and dimethylallyl diphosphate into geranylgeranyl diphosphate (GGDP) that is further converted into fusicocca-2,10(14)-diene, the first precursor for brassicicene C. Fusicocca-2,10(14)-diene is then substrate of cytochrome P450 monooxygenase bsc1 for hydroxylation at the C-8 position. Oxidation at C-16 position to aldehyde is then catalyzed by the cytochrome P450 monooyxygenase bsc7, yielding fusicocca-2,10(14)-diene-8-beta,16-diol. Follows the isomerization of the double bond and reduction of aldehyde to alcohol catalyzed by the short-chain dehydrogenase/reductase bsc3 to yield the diol compound fusicocca-1,10(14)-diene-8 beta,16-diol. The next step is the oxidation at the C-3 position of fusicocca-2,10(14)-diene-8-beta,16-diol catalyzed by the alpha-ketoglutarate dependent dioxygenase bsc9, to produce a triol compound. Methylation of the hydroxy group at position 16 is performed by the methyltransferase bsc6. 16-O-methylation is followed by oxidation at the C-13 position to ketone and an alkyl shift of the methyl group leads to brassicicene C. Although the probable acetyltransferase bsc4 is included in the gene cluster, no acetylation reactions are necessary for brassicicene C biosynthesis. However, the fact that brassicicene E, which is a structurally related compound having an acetoxy group at position 12, was previously isolated from another strain of A.brassicicola suggests that the ATCC 96836 strain might also produce a small amount of brassicicene E. This is 16-O-methyltransferase bsc6 from Alternaria brassicicola (Dark leaf spot agent).